Reading from the N-terminus, the 244-residue chain is Phosphoadenosine 5'-phosphosulfate reductase (244 aa).

Cys-239 acts as the Nucleophile; cysteine thiosulfonate intermediate in catalysis.

This sequence belongs to the PAPS reductase family. CysH subfamily.

Its subcellular location is the cytoplasm. It catalyses the reaction [thioredoxin]-disulfide + sulfite + adenosine 3',5'-bisphosphate + 2 H(+) = [thioredoxin]-dithiol + 3'-phosphoadenylyl sulfate. The protein operates within sulfur metabolism; hydrogen sulfide biosynthesis; sulfite from sulfate: step 3/3. Catalyzes the formation of sulfite from phosphoadenosine 5'-phosphosulfate (PAPS) using thioredoxin as an electron donor. In Salmonella typhi, this protein is Phosphoadenosine 5'-phosphosulfate reductase.